We begin with the raw amino-acid sequence, 238 residues long: Ribosomal RNA small subunit methyltransferase G (238 aa).

Residues G77, F82, 128-129 (AE), and R147 each bind S-adenosyl-L-methionine. Positions 219–238 (RQTPKKYPRKAGLPNKEPIE) are disordered.

This sequence belongs to the methyltransferase superfamily. RNA methyltransferase RsmG family.

It is found in the cytoplasm. Specifically methylates the N7 position of guanine in position 535 of 16S rRNA. The sequence is that of Ribosomal RNA small subunit methyltransferase G from Oceanobacillus iheyensis (strain DSM 14371 / CIP 107618 / JCM 11309 / KCTC 3954 / HTE831).